The primary structure comprises 255 residues: Imidazole glycerol phosphate synthase subunit HisF (255 aa).

Residues aspartate 11 and aspartate 130 contribute to the active site.

Belongs to the HisA/HisF family. Heterodimer of HisH and HisF.

The protein resides in the cytoplasm. The enzyme catalyses 5-[(5-phospho-1-deoxy-D-ribulos-1-ylimino)methylamino]-1-(5-phospho-beta-D-ribosyl)imidazole-4-carboxamide + L-glutamine = D-erythro-1-(imidazol-4-yl)glycerol 3-phosphate + 5-amino-1-(5-phospho-beta-D-ribosyl)imidazole-4-carboxamide + L-glutamate + H(+). Its pathway is amino-acid biosynthesis; L-histidine biosynthesis; L-histidine from 5-phospho-alpha-D-ribose 1-diphosphate: step 5/9. In terms of biological role, IGPS catalyzes the conversion of PRFAR and glutamine to IGP, AICAR and glutamate. The HisF subunit catalyzes the cyclization activity that produces IGP and AICAR from PRFAR using the ammonia provided by the HisH subunit. This is Imidazole glycerol phosphate synthase subunit HisF from Exiguobacterium sp. (strain ATCC BAA-1283 / AT1b).